A 219-amino-acid polypeptide reads, in one-letter code: MGTFFQKIADYSKDAVSAGKYLLQGLAVTFDHMRRRPITVQYPYEKLIPSERYRGRIHYEFDKCIACEVCVRVCPINLPVVDWVMNKETKKKELRNYSIDFGVCIFCGNCVEYCPTNCLSMTEEYELAAFDRHSLNFDNVALGRLPTSVTSDPSVMPLRELGYLPEGVMDPHELPKDSSRAGKLPIEIMDWMKNKESNKSEDNNLDININSLKVEKDSK.

2 consecutive 4Fe-4S ferredoxin-type domains span residues 55–84 (GRIH…VDWV) and 95–124 (RNYS…MTEE). Residues Cys64, Cys67, Cys70, Cys74, Cys104, Cys107, Cys110, and Cys114 each contribute to the [4Fe-4S] cluster site.

This sequence belongs to the complex I 23 kDa subunit family. As to quaternary structure, NDH-1 is composed of at least 11 different subunits. The cofactor is [4Fe-4S] cluster.

The protein resides in the cellular thylakoid membrane. The enzyme catalyses a plastoquinone + NADH + (n+1) H(+)(in) = a plastoquinol + NAD(+) + n H(+)(out). The catalysed reaction is a plastoquinone + NADPH + (n+1) H(+)(in) = a plastoquinol + NADP(+) + n H(+)(out). NDH-1 shuttles electrons from an unknown electron donor, via FMN and iron-sulfur (Fe-S) centers, to quinones in the respiratory and/or the photosynthetic chain. The immediate electron acceptor for the enzyme in this species is believed to be plastoquinone. Couples the redox reaction to proton translocation, and thus conserves the redox energy in a proton gradient. In Prochlorococcus marinus (strain SARG / CCMP1375 / SS120), this protein is NAD(P)H-quinone oxidoreductase subunit I.